The sequence spans 86 residues: RNA-binding protein Hfq (86 aa).

A Sm domain is found at 9 to 68 (DPYLNTLRKEKVPVSIYLVNGIKLQGQIESFDQFVVLLKNTVSQMVYKHAISTVVPARPV). The disordered stretch occupies residues 66–86 (RPVRLPSPSDAEHGDSEPGNA). A compositionally biased stretch (basic and acidic residues) spans 75-86 (DAEHGDSEPGNA).

This sequence belongs to the Hfq family. As to quaternary structure, homohexamer.

RNA chaperone that binds small regulatory RNA (sRNAs) and mRNAs to facilitate mRNA translational regulation in response to envelope stress, environmental stress and changes in metabolite concentrations. Also binds with high specificity to tRNAs. The protein is RNA-binding protein Hfq of Pseudomonas entomophila (strain L48).